Reading from the N-terminus, the 482-residue chain is tRNA sulfurtransferase (482 aa).

Positions 61–165 constitute a THUMP domain; it reads LAIRDALTRI…DDRLLLIKGR (105 aa). ATP contacts are provided by residues 183-184, K265, G287, and Q296; that span reads LI. Residues C344 and C456 are joined by a disulfide bond. One can recognise a Rhodanese domain in the interval 404-482; the sequence is FGPNDVILDI…GFNNVKVYRP (79 aa). C456 (cysteine persulfide intermediate) is an active-site residue.

The protein belongs to the ThiI family.

It localises to the cytoplasm. The enzyme catalyses [ThiI sulfur-carrier protein]-S-sulfanyl-L-cysteine + a uridine in tRNA + 2 reduced [2Fe-2S]-[ferredoxin] + ATP + H(+) = [ThiI sulfur-carrier protein]-L-cysteine + a 4-thiouridine in tRNA + 2 oxidized [2Fe-2S]-[ferredoxin] + AMP + diphosphate. It carries out the reaction [ThiS sulfur-carrier protein]-C-terminal Gly-Gly-AMP + S-sulfanyl-L-cysteinyl-[cysteine desulfurase] + AH2 = [ThiS sulfur-carrier protein]-C-terminal-Gly-aminoethanethioate + L-cysteinyl-[cysteine desulfurase] + A + AMP + 2 H(+). The protein operates within cofactor biosynthesis; thiamine diphosphate biosynthesis. Catalyzes the ATP-dependent transfer of a sulfur to tRNA to produce 4-thiouridine in position 8 of tRNAs, which functions as a near-UV photosensor. Also catalyzes the transfer of sulfur to the sulfur carrier protein ThiS, forming ThiS-thiocarboxylate. This is a step in the synthesis of thiazole, in the thiamine biosynthesis pathway. The sulfur is donated as persulfide by IscS. The polypeptide is tRNA sulfurtransferase (Escherichia coli O45:K1 (strain S88 / ExPEC)).